Here is a 464-residue protein sequence, read N- to C-terminus: MVRLAAELLLLLGLLLLTLHITVLRGSGAADGPDAAAGNASQAQLQNNLNVGSDTTSETSFSLSKEAPREHLDHQAAHQPFPRPRFRQETGHPSLQRDFPRSFLLDLPNFPDLSKADINGQNPNIQVTIEVVDGPDSEADKDQHPENKPSWSVPSPDWRAWWQRSLSLARANSGDQDYKYDSTSDDSNFLNPPRGWDHTAPGHRTFETKDQPEYDSTDGEGDWSLWSVCSVTCGNGNQKRTRSCGYACTATESRTCDRPNCPGIEDTFRTAATEVSLLAGSEEFNATKLFEVDTDSCERWMSCKSEFLKKYMHKVMNDLPSCPCSYPTEVAYSTADIFDRIKRKDFRWKDASGPKEKLEIYKPTARYCIRSMLSLESTTLAAQHCCYGDNMQLITRGKGAGTPNLISTEFSAELHYKVDVLPWIICKGDWSRYNEARPPNNGQKCTESPSDEDYIKQFQEAREY.

Residues 1 to 29 (MVRLAAELLLLLGLLLLTLHITVLRGSGA) form the signal peptide. Residue Asn-39 is glycosylated (N-linked (GlcNAc...) asparagine). Disordered stretches follow at residues 50-98 (NVGS…LQRD), 135-155 (PDSE…SVPS), and 173-219 (SGDQ…STDG). A compositionally biased stretch (polar residues) spans 51–63 (VGSDTTSETSFSL). Composition is skewed to basic and acidic residues over residues 66–76 (EAPREHLDHQA) and 138–147 (EADKDQHPEN). The TSP type-1 domain occupies 218-262 (DGEGDWSLWSVCSVTCGNGNQKRTRSCGYACTATESRTCDRPNCP). Cystine bridges form between Cys-229-Cys-256, Cys-233-Cys-261, and Cys-244-Cys-248. The AMOP domain maps to 289 to 452 (LFEVDTDSCE…QKCTESPSDE (164 aa)).

It belongs to the isthmin family. In terms of assembly, interacts with integrin ITGAV/ITGB5.

Its subcellular location is the secreted. In terms of biological role, acts as an angiogenesis inhibitor. The sequence is that of Isthmin-1 (ISM1) from Homo sapiens (Human).